A 525-amino-acid polypeptide reads, in one-letter code: Lysine--tRNA ligase (525 aa).

The Mg(2+) site is built by E419 and E426.

It belongs to the class-II aminoacyl-tRNA synthetase family. Homodimer. The cofactor is Mg(2+).

The protein resides in the cytoplasm. It carries out the reaction tRNA(Lys) + L-lysine + ATP = L-lysyl-tRNA(Lys) + AMP + diphosphate. This chain is Lysine--tRNA ligase (lysS), found in Deinococcus radiodurans (strain ATCC 13939 / DSM 20539 / JCM 16871 / CCUG 27074 / LMG 4051 / NBRC 15346 / NCIMB 9279 / VKM B-1422 / R1).